Reading from the N-terminus, the 694-residue chain is Potassium-transporting ATPase ATP-binding subunit (694 aa).

4 helical membrane passes run 36 to 56, 62 to 82, 218 to 238, and 249 to 269; these read VMFVVATVSVLTTVLFIRDLI, LAFSFQINLWLWFTVLFANFA, IALNILLAGMTLIFVLATATI, and IPIIVLVALFVTLIPTTIGAL. The active-site 4-aspartylphosphate intermediate is aspartate 306. ATP contacts are provided by residues aspartate 343, glutamate 347, 376 to 383, and lysine 394; that span reads FTAQTRMS. Residues aspartate 530 and aspartate 534 each contribute to the Mg(2+) site. 3 consecutive transmembrane segments (helical) span residues 600–620, 628–648, and 666–686; these read FAIIPAMFLALYPQLGVLNVM, AILSAIIFNALIIIALIPLSL, and LVIYGLGGIIVPFIGIKLIDL.

This sequence belongs to the cation transport ATPase (P-type) (TC 3.A.3) family. Type IA subfamily. The system is composed of three essential subunits: KdpA, KdpB and KdpC.

The protein resides in the cell inner membrane. The enzyme catalyses K(+)(out) + ATP + H2O = K(+)(in) + ADP + phosphate + H(+). In terms of biological role, part of the high-affinity ATP-driven potassium transport (or Kdp) system, which catalyzes the hydrolysis of ATP coupled with the electrogenic transport of potassium into the cytoplasm. This subunit is responsible for energy coupling to the transport system and for the release of the potassium ions to the cytoplasm. The protein is Potassium-transporting ATPase ATP-binding subunit of Agrobacterium fabrum (strain C58 / ATCC 33970) (Agrobacterium tumefaciens (strain C58)).